The chain runs to 311 residues: Urease accessory protein UreD (311 aa).

It belongs to the UreD family. As to quaternary structure, ureD, UreF and UreG form a complex that acts as a GTP-hydrolysis-dependent molecular chaperone, activating the urease apoprotein by helping to assemble the nickel containing metallocenter of UreC. The UreE protein probably delivers the nickel.

It localises to the cytoplasm. Its function is as follows. Required for maturation of urease via the functional incorporation of the urease nickel metallocenter. This chain is Urease accessory protein UreD, found in Synechococcus sp. (strain CC9902).